Here is a 110-residue protein sequence, read N- to C-terminus: DNA-directed RNA polymerase subunit omega (110 aa).

This sequence belongs to the RNA polymerase subunit omega family. In terms of assembly, the RNAP catalytic core consists of 2 alpha, 1 beta, 1 beta' and 1 omega subunit. When a sigma factor is associated with the core the holoenzyme is formed, which can initiate transcription.

The enzyme catalyses RNA(n) + a ribonucleoside 5'-triphosphate = RNA(n+1) + diphosphate. Functionally, promotes RNA polymerase assembly. Latches the N- and C-terminal regions of the beta' subunit thereby facilitating its interaction with the beta and alpha subunits. This chain is DNA-directed RNA polymerase subunit omega, found in Vesicomyosocius okutanii subsp. Calyptogena okutanii (strain HA).